We begin with the raw amino-acid sequence, 477 residues long: UDP-N-acetylmuramate--L-alanine ligase (477 aa).

G122–T128 contacts ATP.

This sequence belongs to the MurCDEF family.

The protein resides in the cytoplasm. It catalyses the reaction UDP-N-acetyl-alpha-D-muramate + L-alanine + ATP = UDP-N-acetyl-alpha-D-muramoyl-L-alanine + ADP + phosphate + H(+). The protein operates within cell wall biogenesis; peptidoglycan biosynthesis. In terms of biological role, cell wall formation. This is UDP-N-acetylmuramate--L-alanine ligase from Xylella fastidiosa (strain M12).